The chain runs to 489 residues: FAD-containing monooxygenase EthA (489 aa).

Residues Ser15, Glu36, 44-47 (TWDL), Asp56, and Val104 contribute to the FAD site. Residue 54–56 (RSD) participates in NADP(+) binding. Residues 183–189 (SGATAVT) and 207–208 (RS) contribute to the NADP(+) site.

The protein belongs to the FAD-binding monooxygenase family. The cofactor is FAD.

The protein resides in the cell membrane. The catalysed reaction is ethionamide + NADPH + O2 + H(+) = ethionamide S-oxide + NADP(+) + H2O. Functionally, monooxygenase able to convert a wide range of ketones to the corresponding esters or lactones via a Baeyer-Villiger oxidation reaction. Can act on long-chain aliphatic ketones (2-hexanone to 2-dodecanone) and on aromatic ketones (phenylacetone and benzylacetone). Is also able to catalyze enantioselective sulfoxidation of methyl-p-tolylsulfide. In vivo, likely functions as a BVMO, but the exact nature of the physiological substrate(s) remains to be established. Is responsible for the activation of several thiocarbamide-containing pro-drugs, such as ethionamide (ETH), isoxyl (ISO) and thiacetazone (TAC), into reactive species. In Mycobacterium bovis (strain ATCC BAA-935 / AF2122/97), this protein is FAD-containing monooxygenase EthA (ethA).